The primary structure comprises 405 residues: Transposase from transposon Tn1545 (405 aa).

Residues 79 to 163 form the Core-binding (CB) domain; it reads GKKMTLCQLY…SLKASFYIAI (85 aa). The region spanning 186–392 is the Tyr recombinase domain; the sequence is VPKTVLTEEQ…TFDSAMAEMK (207 aa). Residues Arg-225, Lys-264, His-343, Arg-346, and His-369 contribute to the active site. The active-site O-(3'-phospho-DNA)-tyrosine intermediate is Tyr-379.

This sequence belongs to the 'phage' integrase family.

This Streptococcus agalactiae serotype V (strain ATCC BAA-611 / 2603 V/R) protein is Transposase from transposon Tn1545 (int).